Here is a 236-residue protein sequence, read N- to C-terminus: Diaminopimelate epimerase (236 aa).

Substrate contacts are provided by asparagine 8 and asparagine 55. Residue cysteine 64 is the Proton donor of the active site. Residues 65–66 (GN), asparagine 159, and 176–177 (ER) contribute to the substrate site. The active-site Proton acceptor is cysteine 186. Residue 187–188 (GT) coordinates substrate.

It belongs to the diaminopimelate epimerase family. As to quaternary structure, probably forms homotrimers.

Its subcellular location is the cytoplasm. It carries out the reaction (2S,6S)-2,6-diaminopimelate = meso-2,6-diaminopimelate. Its pathway is amino-acid biosynthesis; L-lysine biosynthesis via DAP pathway; DL-2,6-diaminopimelate from LL-2,6-diaminopimelate: step 1/1. In terms of biological role, catalyzes the stereoinversion of LL-2,6-diaminopimelate (L,L-DAP) to meso-diaminopimelate (meso-DAP), a precursor of L-lysine and an essential component of the bacterial peptidoglycan. Also catalyzes the racemization of certain amino acids, including Lys, with low efficiency. This is Diaminopimelate epimerase from Thermotoga maritima (strain ATCC 43589 / DSM 3109 / JCM 10099 / NBRC 100826 / MSB8).